Reading from the N-terminus, the 298-residue chain is Succinate dehydrogenase [ubiquinone] iron-sulfur subunit, mitochondrial (298 aa).

A 2Fe-2S ferredoxin-type domain is found at 59–147 (YRFNPEAPGA…STKIYPLPHM (89 aa)). Residues Cys-107, Cys-112, Cys-115, and Cys-127 each contribute to the [2Fe-2S] cluster site. Positions 190-220 (ERDRLDGLYECILCACCSTSCPSYWWNADKY) constitute a 4Fe-4S ferredoxin-type domain. The [4Fe-4S] cluster site is built by Cys-200, Cys-203, and Cys-206. Cys-210 lines the [3Fe-4S] cluster pocket. Position 215 (Trp-215) interacts with a ubiquinone. Residues Cys-257 and Cys-263 each coordinate [3Fe-4S] cluster. Cys-267 contacts [4Fe-4S] cluster.

Belongs to the succinate dehydrogenase/fumarate reductase iron-sulfur protein family. Component of complex II composed of four subunits: a flavoprotein (FP), an iron-sulfur protein (IP), and a cytochrome b composed of a large and a small subunit. Requires [2Fe-2S] cluster as cofactor. The cofactor is [3Fe-4S] cluster. [4Fe-4S] cluster is required as a cofactor.

It localises to the mitochondrion inner membrane. The enzyme catalyses a quinone + succinate = fumarate + a quinol. It functions in the pathway carbohydrate metabolism; tricarboxylic acid cycle; fumarate from succinate (eukaryal route): step 1/1. Functionally, iron-sulfur protein (IP) subunit of succinate dehydrogenase (SDH) that is involved in complex II of the mitochondrial electron transport chain and is responsible for transferring electrons from succinate to ubiquinone (coenzyme Q). The polypeptide is Succinate dehydrogenase [ubiquinone] iron-sulfur subunit, mitochondrial (sdhb-1) (Caenorhabditis elegans).